The sequence spans 507 residues: GMP synthase [glutamine-hydrolyzing] 1 (507 aa).

The 190-residue stretch at 4–193 (KIIILDFGSQ…VVDVCGCKQD (190 aa)) folds into the Glutamine amidotransferase type-1 domain. Catalysis depends on C79, which acts as the Nucleophile. Active-site residues include H167 and E169. A GMPS ATP-PPase domain is found at 194-382 (WSPASFIEST…LGMPEHLITR (189 aa)). Position 221-227 (221-227 (SGGVDSS)) interacts with ATP.

As to quaternary structure, homodimer.

The enzyme catalyses XMP + L-glutamine + ATP + H2O = GMP + L-glutamate + AMP + diphosphate + 2 H(+). Its pathway is purine metabolism; GMP biosynthesis; GMP from XMP (L-Gln route): step 1/1. Functionally, catalyzes the synthesis of GMP from XMP. This chain is GMP synthase [glutamine-hydrolyzing] 1 (guaA1), found in Bacteroides thetaiotaomicron (strain ATCC 29148 / DSM 2079 / JCM 5827 / CCUG 10774 / NCTC 10582 / VPI-5482 / E50).